The following is a 398-amino-acid chain: Cytochrome b (398 aa).

A helical membrane pass occupies residues 45–65; sequence LGSIAGIALVIQIITGVILAM. Heme b is bound by residues H95 and H109. 9 helical membrane-spanning segments follow: residues 96-116, 129-149, 164-184, 192-212, 245-265, 277-297, 304-324, 339-359, and 366-386; these read AVGASMFFAAVYLHIARGLYY, IGIIIFLTMMATAFMGYVLPW, FSAIPLIGEFIVTWLWGGFSV, FFSLHYLLPFIIVALVMLHLV, FVGFGVYFIIFAYFIFYEPNY, PLVTPAHIVPEWYFLPFYAIL, LGGVLLMFGSIFVLFLLPWLD, MAFWIFMADCLLLGYLGGQPA, and ISRFAACYYFFHVLVALPLIG. Heme b is bound by residues H196 and H210.

Belongs to the cytochrome b family. The main subunits of complex b-c1 are: cytochrome b, cytochrome c1 and the Rieske protein. Heme b is required as a cofactor.

Its subcellular location is the cell membrane. Its function is as follows. Component of the ubiquinol-cytochrome c reductase complex (complex III or cytochrome b-c1 complex), which is a respiratory chain that generates an electrochemical potential coupled to ATP synthesis. This Rickettsia conorii (strain ATCC VR-613 / Malish 7) protein is Cytochrome b (petB).